We begin with the raw amino-acid sequence, 106 residues long: Toxin-like structure LSTX-D8 (106 aa).

The signal sequence occupies residues 1–20 (MTKVLVVVALLVTLISYSSS). A propeptide spanning residues 21 to 41 (EGIDDLEADELLSLMANEQTR) is cleaved from the precursor. 4 disulfide bridges follow: C45–C60, C52–C69, C59–C85, and C71–C83.

Belongs to the neurotoxin 19 (CSTX) family. 02 (D7) subfamily. As to expression, expressed by the venom gland.

The protein localises to the secreted. The chain is Toxin-like structure LSTX-D8 from Lycosa singoriensis (Wolf spider).